The sequence spans 425 residues: MATAVVVNIGKKLYEGKTKEVYELLDTPGRVLLQSKDQITAGNAARKNHLEGKAAISNKITSCIFQLLQEAGIKTAFTKKCGETAFIAPQCEMIPIEWVCRRIATGSFLKRNPGVQEGYKFYPPKVEMFFKDDANNDPQWSEEQLIAAKFCFAGLVIGQTEVDIMSHATQAIFEILEKSWLPQDCTLVDMKIEFGVDVTTKEIVLADVIDNDSWRLWPSGDRSQQKDKQSYRDLKEVTPEGLQMVKKNFEWVADRVELLLKSDSQCRVVVLMGSTSDLGHCEKIKKACGNFGIPCELRVTSAHKGPDETLRIKAEYEGDGIPTVFVSVAGRSNGLGPVLSGNTAYPVISCPPITPDWGAQDVWSSLRLPSGIGCSTILSPEGSAQFAAQIFGLNNHLVWAKLRASILNTWISLKQADKKVRQCNL.

An N-acetylalanine modification is found at alanine 2. Residues 2-260 (ATAVVVNIGK…WVADRVELLL (259 aa)) form an SAICAR synthetase domain region. Phosphotyrosine is present on tyrosine 22. Lysine 36 carries the N6-acetyllysine modification. Phosphoserine is present on serine 107. Position 238 is a phosphothreonine (threonine 238). The residue at position 247 (lysine 247) is an N6-acetyllysine. The tract at residues 261-266 (KSDSQC) is linker. An AIR carboxylase domain region spans residues 267–425 (RVVVLMGSTS…ADKKVRQCNL (159 aa)). At serine 274 the chain carries Phosphoserine. Residue serine 332 coordinates CO2.

It in the N-terminal section; belongs to the SAICAR synthetase family. In the C-terminal section; belongs to the AIR carboxylase family. Class II subfamily. As to quaternary structure, homooctamer.

It carries out the reaction 5-amino-1-(5-phospho-D-ribosyl)imidazole-4-carboxylate + L-aspartate + ATP = (2S)-2-[5-amino-1-(5-phospho-beta-D-ribosyl)imidazole-4-carboxamido]succinate + ADP + phosphate + 2 H(+). The catalysed reaction is 5-amino-1-(5-phospho-D-ribosyl)imidazole-4-carboxylate + H(+) = 5-amino-1-(5-phospho-beta-D-ribosyl)imidazole + CO2. The protein operates within purine metabolism; IMP biosynthesis via de novo pathway; 5-amino-1-(5-phospho-D-ribosyl)imidazole-4-carboxamide from 5-amino-1-(5-phospho-D-ribosyl)imidazole-4-carboxylate: step 1/2. It functions in the pathway purine metabolism; IMP biosynthesis via de novo pathway; 5-amino-1-(5-phospho-D-ribosyl)imidazole-4-carboxylate from 5-amino-1-(5-phospho-D-ribosyl)imidazole (carboxylase route): step 1/1. Its function is as follows. Bifunctional phosphoribosylaminoimidazole carboxylase and phosphoribosylaminoimidazole succinocarboxamide synthetase catalyzing two reactions of the de novo purine biosynthetic pathway. The protein is Bifunctional phosphoribosylaminoimidazole carboxylase/phosphoribosylaminoimidazole succinocarboxamide synthetase of Mus musculus (Mouse).